A 314-amino-acid chain; its full sequence is Acetaldehyde dehydrogenase 3 (314 aa).

The active-site Acyl-thioester intermediate is the Cys-132. Residues 163 to 171 and Asn-291 contribute to the NAD(+) site; that span reads SAGPGTRAN.

It belongs to the acetaldehyde dehydrogenase family.

The catalysed reaction is acetaldehyde + NAD(+) + CoA = acetyl-CoA + NADH + H(+). The chain is Acetaldehyde dehydrogenase 3 from Dechloromonas aromatica (strain RCB).